We begin with the raw amino-acid sequence, 99 residues long: Plastocyanin (99 aa).

The Plastocyanin-like domain maps to 1-99; the sequence is VEVLMGGSGG…IGMSGIVTVN (99 aa). Residues His-37, Cys-84, His-87, and Met-92 each coordinate Cu cation.

This sequence belongs to the plastocyanin family. Requires Cu(2+) as cofactor.

It localises to the plastid. The protein localises to the chloroplast thylakoid membrane. Participates in electron transfer between P700 and the cytochrome b6-f complex in photosystem I. The sequence is that of Plastocyanin (PETE) from Ginkgo biloba (Ginkgo).